We begin with the raw amino-acid sequence, 690 residues long: Elongation factor G (690 aa).

Residues 8 to 283 (SKCRNIGIMA…AVVDFLPAPN (276 aa)) enclose the tr-type G domain. GTP contacts are provided by residues 17 to 24 (AHIDAGKT), 81 to 85 (DTPGH), and 135 to 138 (NKMD).

It belongs to the TRAFAC class translation factor GTPase superfamily. Classic translation factor GTPase family. EF-G/EF-2 subfamily.

Its subcellular location is the cytoplasm. Functionally, catalyzes the GTP-dependent ribosomal translocation step during translation elongation. During this step, the ribosome changes from the pre-translocational (PRE) to the post-translocational (POST) state as the newly formed A-site-bound peptidyl-tRNA and P-site-bound deacylated tRNA move to the P and E sites, respectively. Catalyzes the coordinated movement of the two tRNA molecules, the mRNA and conformational changes in the ribosome. The sequence is that of Elongation factor G from Ehrlichia chaffeensis (strain ATCC CRL-10679 / Arkansas).